Here is a 402-residue protein sequence, read N- to C-terminus: Calcium-responsive transactivator (402 aa).

Residues 1 to 148 (MSVAFASARP…TLPTTSMSLS (148 aa)) form an N-terminal auto-inhibitory domain; necessary for interaction with SMARCA4/BRG1 region. The short motif at 50 to 53 (YQQI) is the SH2-binding element. 2 disordered regions span residues 72 to 171 (QSLL…VPMQ) and 221 to 402 (AMMG…NYQQ). Residues 85 to 106 (LGPGALSQSGSSQGLHPQGSLS) are compositionally biased toward low complexity. Polar residues-rich tracts occupy residues 128–149 (NHVS…SLSG) and 161–171 (SGPTSQSVPMQ). Residues 149 to 238 (GSGHGTGPGY…GGSMMGQRPM (90 aa)) are methionine-rich intra-molecular domain. Residues 233–251 (MGQRPMAPYRPSQQGSSQQ) show a composition bias toward low complexity. Residues 252–323 (YLGQEEYYSE…SQYSQQQAGY (72 aa)) form an MFD domain region. Residues 261-277 (EQYSHSQGSAEPMSQQY) are compositionally biased toward polar residues. Positions 296-305 (SYDRSFEDPT) are enriched in basic and acidic residues. The segment covering 311–375 (GGNSQYSQQQ…QGQGQQYGSY (65 aa)) has biased composition (low complexity). Residues 340 to 402 (NQQSYPGQQQ…EQGQYGNYQQ (63 aa)) form a necessary for nuclear localization region. The SH2-binding motif lies at 359-362 (SQYS). The span at 376 to 388 (RTSQTGPSAQQQR) shows a compositional bias: polar residues. An SH3-binding motif is present at residues 377 to 385 (TSQTGPSAQ). The segment covering 390-402 (YGYEQGQYGNYQQ) has biased composition (low complexity). The tract at residues 393-402 (EQGQYGNYQQ) is necessary for interaction with CREBBP and for the recruitment of CREBBP to the nuclear bodies. The SH2-binding signature appears at 397 to 400 (YGNY).

It belongs to the SS18 family. In terms of assembly, homodimer. Dimerization may be necessary for its function in neuronal dendritic development. Interacts (via C-terminus) with CREBBP (via N-terminus), EP300 and SMARCA4/BRG1. Interacts with the nBAF complex. Association with CREBBP facilitates transcription while the association with SMARCA4/BRG1 suppresses CREST-mediated transcription in resting neurons.

The protein localises to the nucleus. The protein resides in the chromosome. It is found in the centromere. Its subcellular location is the kinetochore. Transcriptional activator which is required for calcium-dependent dendritic growth and branching in cortical neurons. Recruits CREB-binding protein (CREBBP) to nuclear bodies. Component of the CREST-BRG1 complex, a multiprotein complex that regulates promoter activation by orchestrating a calcium-dependent release of a repressor complex and a recruitment of an activator complex. In resting neurons, transcription of the c-FOS promoter is inhibited by BRG1-dependent recruitment of a phospho-RB1-HDAC1 repressor complex. Upon calcium influx, RB1 is dephosphorylated by calcineurin, which leads to release of the repressor complex. At the same time, there is increased recruitment of CREBBP to the promoter by a CREST-dependent mechanism, which leads to transcriptional activation. The CREST-BRG1 complex also binds to the NR2B promoter, and activity-dependent induction of NR2B expression involves a release of HDAC1 and recruitment of CREBBP. This Mus musculus (Mouse) protein is Calcium-responsive transactivator (Ss18l1).